We begin with the raw amino-acid sequence, 289 residues long: ATP synthase subunit a (289 aa).

A run of 6 helical transmembrane segments spans residues 43–63 (AFHV…LFIF), 104–124 (IAPL…IDLV), 160–180 (ISVF…GGFL), 193–213 (IVVQ…TLIA), 232–252 (IFIL…ALGV), and 259–279 (AVFH…LTIV).

Belongs to the ATPase A chain family. As to quaternary structure, F-type ATPases have 2 components, CF(1) - the catalytic core - and CF(0) - the membrane proton channel. CF(1) has five subunits: alpha(3), beta(3), gamma(1), delta(1), epsilon(1). CF(0) has three main subunits: a(1), b(2) and c(9-12). The alpha and beta chains form an alternating ring which encloses part of the gamma chain. CF(1) is attached to CF(0) by a central stalk formed by the gamma and epsilon chains, while a peripheral stalk is formed by the delta and b chains.

It is found in the cell inner membrane. In terms of biological role, key component of the proton channel; it plays a direct role in the translocation of protons across the membrane. This chain is ATP synthase subunit a, found in Pseudomonas paraeruginosa (strain DSM 24068 / PA7) (Pseudomonas aeruginosa (strain PA7)).